We begin with the raw amino-acid sequence, 480 residues long: Adenosylmethionine-8-amino-7-oxononanoate aminotransferase (480 aa).

126–127 (GS) is a pyridoxal 5'-phosphate binding site. Position 160 (Tyr160) interacts with substrate. Asp270 provides a ligand contact to pyridoxal 5'-phosphate. At Lys314 the chain carries N6-(pyridoxal phosphate)lysine. Gly350 contributes to the substrate binding site. A pyridoxal 5'-phosphate-binding site is contributed by 351 to 352 (PT). Position 441 (Arg441) interacts with substrate.

This sequence belongs to the class-III pyridoxal-phosphate-dependent aminotransferase family. BioA subfamily. Requires pyridoxal 5'-phosphate as cofactor.

The catalysed reaction is (8S)-8-amino-7-oxononanoate + S-adenosyl-L-methionine = S-adenosyl-4-methylsulfanyl-2-oxobutanoate + (7R,8S)-7,8-diammoniononanoate. It participates in cofactor biosynthesis; biotin biosynthesis; 7,8-diaminononanoate from 8-amino-7-oxononanoate (SAM route): step 1/1. Catalyzes the transfer of the alpha-amino group from S-adenosyl-L-methionine (SAM) to 7-keto-8-aminopelargonic acid (KAPA) to form 7,8-diaminopelargonic acid (DAPA). It is the only aminotransferase known to utilize SAM as an amino donor. This chain is Adenosylmethionine-8-amino-7-oxononanoate aminotransferase, found in Saccharomyces cerevisiae (strain ATCC 204508 / S288c) (Baker's yeast).